A 178-amino-acid chain; its full sequence is MTTLRAFTCDDLFRFNNINLDPLTETYGIPFYLQYLAHWPEYFIVAEAPGGELMGYIMGKAEGSVAREEWHGHVTALSVAPEFRRLGLAAKLMELLEEISERKGGFFVDLFVRVSNQVAVNMYKQLGYSVYRTVIEYYSASNGEPDEDAYDMRKALSRDTEKKSIVPLPHPVRPEDIE.

Residues 2–157 (TTLRAFTCDD…DAYDMRKALS (156 aa)) enclose the N-acetyltransferase domain. Positions 159–178 (DTEKKSIVPLPHPVRPEDIE) are disordered.

Belongs to the acetyltransferase family. ARD1 subfamily. Component of the N-terminal acetyltransferase B (NatB) complex which is composed of naa20 and naa25.

The protein resides in the cytoplasm. It is found in the nucleus. It catalyses the reaction N-terminal L-methionyl-L-asparaginyl-[protein] + acetyl-CoA = N-terminal N(alpha)-acetyl-L-methionyl-L-asparaginyl-[protein] + CoA + H(+). The catalysed reaction is N-terminal L-methionyl-L-glutaminyl-[protein] + acetyl-CoA = N-terminal N(alpha)-acetyl-L-methionyl-L-glutaminyl-[protein] + CoA + H(+). The enzyme catalyses N-terminal L-methionyl-L-aspartyl-[protein] + acetyl-CoA = N-terminal N(alpha)-acetyl-L-methionyl-L-aspartyl-[protein] + CoA + H(+). It carries out the reaction N-terminal L-methionyl-L-glutamyl-[protein] + acetyl-CoA = N-terminal N(alpha)-acetyl-L-methionyl-L-glutamyl-[protein] + CoA + H(+). In terms of biological role, catalytic subunit of the NatB complex which catalyzes acetylation of the N-terminal methionine residues of peptides beginning with Met-Asp, Met-Glu, Met-Asn and Met-Gln. Proteins with cell cycle functions are overrepresented in the pool of NatB substrates. Required for maintaining the structure and function of actomyosin fibers and for proper cellular migration. The chain is N-alpha-acetyltransferase 20 (naa20) from Xenopus laevis (African clawed frog).